The following is a 457-amino-acid chain: Heme sensor protein HssS (457 aa).

2 helical membrane passes run 9–29 and 164–184; these read IAIYSITVILFSALISFVLTN and TFLAVLLMLLLFISISLVIAS. Positions 186 to 238 constitute an HAMP domain; sequence YSIIRPVKKLKLATERLIDGDFETPIKQTRKDEIGTLQYHFNKMRESLGQVDQ. The Histidine kinase domain maps to 246 to 456; that stretch reads NVSHEIKTPL…TFTITLPNNS (211 aa). His-249 is modified (phosphohistidine; by autocatalysis).

Post-translationally, autophosphorylated.

Its subcellular location is the cell membrane. The enzyme catalyses ATP + protein L-histidine = ADP + protein N-phospho-L-histidine.. Its function is as follows. Member of the two-component regulatory system HssS/HssR involved in intracellular heme homeostasis and tempering of staphylococcal virulence. HssS functions as a heme sensor histidine kinase which is autophosphorylated at a histidine residue and transfers its phosphate group to an aspartate residue of HssR. HssR/HssS activates the expression of hrtAB, an efflux pump, in response to extracellular heme, hemin, hemoglobin or blood. The chain is Heme sensor protein HssS (hssS) from Staphylococcus aureus (strain MSSA476).